The following is a 211-amino-acid chain: tRNA (guanine-N(7)-)-methyltransferase (211 aa).

S-adenosyl-L-methionine contacts are provided by Glu44, Asp69, Asp96, and Asp118. The active site involves Asp118. Lys122 contributes to the substrate binding site. The segment at 124–129 is interaction with RNA; the sequence is RHEKRR. Residues Asp154 and 191-194 each bind substrate; that span reads TEYE.

The protein belongs to the class I-like SAM-binding methyltransferase superfamily. TrmB family.

It carries out the reaction guanosine(46) in tRNA + S-adenosyl-L-methionine = N(7)-methylguanosine(46) in tRNA + S-adenosyl-L-homocysteine. Its pathway is tRNA modification; N(7)-methylguanine-tRNA biosynthesis. Catalyzes the formation of N(7)-methylguanine at position 46 (m7G46) in tRNA. This Streptococcus pneumoniae (strain CGSP14) protein is tRNA (guanine-N(7)-)-methyltransferase.